A 465-amino-acid polypeptide reads, in one-letter code: uncharacterized protein (465 aa).

The RAMA domain maps to 6 to 91 (NVTLSNLIDF…LKLKREYLFR (86 aa)). Disordered regions lie at residues 95–377 (TGKN…SNNQ) and 392–465 (YNQQ…KSKS). The segment covering 117-137 (PQQQQQQQQQQQQQQQQQQQP) has biased composition (low complexity). Positions 156–169 (ETSDQDIDNDDDDA) are enriched in acidic residues. Low complexity predominate over residues 177–190 (TTTTTTTTTTTTTT). Residues 208–220 (PKEKKKEKKENIL) show a composition bias toward basic and acidic residues. A coiled-coil region spans residues 214-242 (EKKENILTKKKQQSLQYQQQLQLLQRQNS). Residues 226–263 (QSLQYQQQLQLLQRQNSPPSVSPSSSTSTSSSTSSPAS) show a composition bias toward low complexity. Residues 264-294 (NQIFNSFGPNSQNHNQYGINYNSQQHQPQQY) are compositionally biased toward polar residues. Over residues 295–376 (NNNNNNNNNN…NNNINNNSNN (82 aa)) the composition is skewed to low complexity. Over residues 392-407 (YNQQNPPKHQYPNNFL) the composition is skewed to polar residues. A compositionally biased stretch (low complexity) spans 424–442 (NQSQNQNQNQNQNQNQNQK). Basic residues predominate over residues 443 to 465 (SKSKSKSKSKFKSKSKSKSKSKS).

This is an uncharacterized protein from Dictyostelium discoideum (Social amoeba).